The chain runs to 834 residues: Mannosyl-oligosaccharide glucosidase (834 aa).

Residues Met-1–Ala-10 are compositionally biased toward basic residues. The Cytoplasmic segment spans residues Met-1 to Arg-36. Residues Met-1 to Gly-37 are disordered. Positions Arg-3–Arg-9 match the Endoplasmic reticulum targeting motif. The span at Arg-17–Arg-31 shows a compositional bias: basic and acidic residues. A helical; Signal-anchor for type II membrane protein membrane pass occupies residues Gly-37–Gly-57. Topologically, residues Arg-58–Tyr-834 are lumenal. Positions Pro-74–Cys-136 are required for endoplasmic reticulum targeting. Asp-580 acts as the Proton donor in catalysis. Asn-654 carries N-linked (GlcNAc...) asparagine glycosylation. Catalysis depends on Glu-804, which acts as the Proton acceptor.

This sequence belongs to the glycosyl hydrolase 63 family.

Its subcellular location is the endoplasmic reticulum membrane. The enzyme catalyses N(4)-(alpha-D-Glc-(1-&gt;2)-alpha-D-Glc-(1-&gt;3)-alpha-D-Glc-(1-&gt;3)-alpha-D-Man-(1-&gt;2)-alpha-D-Man-(1-&gt;2)-alpha-D-Man-(1-&gt;3)-[alpha-D-Man-(1-&gt;2)-alpha-D-Man-(1-&gt;3)-[alpha-D-Man-(1-&gt;2)-alpha-D-Man-(1-&gt;6)]-alpha-D-Man-(1-&gt;6)]-beta-D-Man-(1-&gt;4)-beta-D-GlcNAc-(1-&gt;4)-beta-D-GlcNAc)-L-asparaginyl-[protein] + H2O = N(4)-(alpha-D-Glc-(1-&gt;3)-alpha-D-Glc-(1-&gt;3)-alpha-D-Man-(1-&gt;2)-alpha-D-Man-(1-&gt;2)-alpha-D-Man-(1-&gt;3)-[alpha-D-Man-(1-&gt;2)-alpha-D-Man-(1-&gt;3)-[alpha-D-Man-(1-&gt;2)-alpha-D-Man-(1-&gt;6)]-alpha-D-Man-(1-&gt;6)]-beta-D-Man-(1-&gt;4)-beta-D-GlcNAc-(1-&gt;4)-beta-D-GlcNAc)-L-asparaginyl-[protein] + beta-D-glucose. It functions in the pathway glycan metabolism; N-glycan degradation. In the context of N-glycan degradation, cleaves the distal alpha 1,2-linked glucose residue from the Glc(3)Man(9)GlcNAc(2) oligosaccharide precursor in a highly specific manner. The protein is Mannosyl-oligosaccharide glucosidase of Rattus norvegicus (Rat).